We begin with the raw amino-acid sequence, 32 residues long: Beta-amanitin proprotein (32 aa).

Residues 1–10 constitute a propeptide that is removed on maturation; sequence MSDINATRLP. Residues 11–18 constitute a cross-link (cyclopeptide (Ile-Pro)); the sequence is IWGIGCDP. A cross-link (2'-cysteinyl-6'-hydroxytryptophan sulfoxide (Trp-Cys)) is located at residues 12 to 16; it reads WGIGC. The propeptide occupies 19–32; sequence CIGDDVTILLTRGE.

This sequence belongs to the MSDIN fungal toxin family. Processed by the macrocyclase-peptidase enzyme POPB to yield a toxic cyclic decapeptide. POPB first removes 10 residues from the N-terminus. Conformational trapping of the remaining peptide forces the enzyme to release this intermediate rather than proceed to macrocyclization. The enzyme rebinds the remaining peptide in a different conformation and catalyzes macrocyclization of the N-terminal 8 residues.

Its function is as follows. Toxin belonging to the bicyclic octapeptides amatoxins that acts by binding non-competitively to RNA polymerase II and greatly slowing the elongation of transcripts from target promoters. The chain is Beta-amanitin proprotein from Amanita phalloides (Death cap).